A 118-amino-acid chain; its full sequence is Neutral phospholipase A2 homolog taipoxin beta chain 2 (118 aa).

Intrachain disulfides connect cysteine 11-cysteine 71, cysteine 27-cysteine 117, cysteine 29-cysteine 45, cysteine 44-cysteine 98, cysteine 51-cysteine 91, cysteine 60-cysteine 84, and cysteine 78-cysteine 89.

It belongs to the phospholipase A2 family. Group I subfamily. D49 sub-subfamily. Heterotrimer of alpha, beta, and gamma chains; non-covalently linked. Expressed by the venom gland.

It is found in the secreted. Heterotrimer: Snake venom phospholipase A2 (PLA2) heterotrimer that acts as a potent presynaptic neurotoxin by blocking synaptic transmission and synaptic vesicle recycling. May act by binding in a calcium-dependent fashion to neurotonal pentraxin-1 (NPTX1) and neurotonal pentraxin-2 (NPTX2), but not to neuronal pentraxin receptor (NPTXR). Also binds to taipoxin-associated calcium binding protein 49 (RCN2), a protein localized in the lumen of endoplasmic reticulum. Functionally, monomer (beta chain): Snake venom phospholipase A2 homolog that is neither toxic nor enzymatically active. Does not bind calcium. This is Neutral phospholipase A2 homolog taipoxin beta chain 2 from Oxyuranus scutellatus scutellatus (Australian taipan).